We begin with the raw amino-acid sequence, 857 residues long: MAEAIVSVTVQKLGQLLLEEPLFLFGIGDQVKQLQDELKRLNCFLKDADEKQHESERVRNWVAGIREASYDAEDILEAFFLKAESRKQKGMKRVLRRLACILNEAVSLHSVGSEIREITSRLSKIAASMLDFGIKESMGREGLSLSDSLREQRQSFPYVVEHNLVGLEQSLEKLVNDLVSGGEKLRVTSICGMGGLGKTTLAKQIFHHHKVRRHFDRFAWVYVSQDCRRRHVWQDIFLNLSYKDENQRILSLRDEQLGEELHRFLKRNKCLIVLDDIWGKDAWDCLKHVFPHETGSEIILTTRNKEVALYADPRGVLHEPQLLTCEESWELLEKISLSGRENIEPMLVKKMEEIGKQIVVRCGGLPLAITVLGGLLATKSTWNEWQRVCENIKSYVSNGGSSNGSKNMLVADVLCLSYEYLPPHVKQCFLYFAHYPEDYEVHVGTLVSYCIAEGMVMPVKHTEAGTTVEDVGQDYLEELVKRSMVMVGRRDIVTSEVMTCRMHDLMREVCLQKAKQESFVQVIDSRDQDEAEAFISLSTNTSRRISVQLHGGAEEHHIKSLSQVSFRKMKLLRVLDLEGAQIEGGKLPDDVGDLIHLRNLSVRLTNVKELTSSIGNLKLMITLDLFVKGQLYIPNQLWDFPVGKCNPRDLLAMTSLRRLSINLSSQNTDFVVVSSLSKVLKRLRGLTINVPCEPMLPPVDVTQLVSAFTNLCELELFLKLEKLPGEQSFSSDLGALRLWQCGLVDDPFMVLEKLPNLKILQLFEGSFVGSKLCCSKNLENLEEWTVEDGAMMRLVTVELKCCNKLKSVPEGTRFLKNLQEVEIGNRTKAFKDKLISGGEDFYKVQHVPCVVFENCEL.

A coiled-coil region spans residues 27 to 60 (IGDQVKQLQDELKRLNCFLKDADEKQHESERVRN). The NB-ARC domain occupies 148–461 (SLREQRQSFP…AEGMVMPVKH (314 aa)). An ATP-binding site is contributed by 192-199 (GMGGLGKT). 4 LRR repeats span residues 653–678 (MTSL…SLSK), 680–703 (LKRL…DVTQ), 754–780 (LPNL…NLEN), and 791–816 (MMRL…RFLK).

It belongs to the disease resistance NB-LRR family.

Its function is as follows. Potential disease resistance protein. The polypeptide is Putative disease resistance protein At1g50180 (Arabidopsis thaliana (Mouse-ear cress)).